A 298-amino-acid polypeptide reads, in one-letter code: Protein ABIL1 (298 aa).

This sequence belongs to the ABI family. In terms of assembly, binds SCAR2. As to expression, expressed in seedlings, roots, hypocotyls, cotyledons, leaves, stems, and flowers.

The protein resides in the cytoplasm. It is found in the cytoskeleton. Involved in regulation of actin and microtubule organization. Part of a WAVE complex that activates the Arp2/3 complex. The sequence is that of Protein ABIL1 (ABIL1) from Arabidopsis thaliana (Mouse-ear cress).